Here is a 1007-residue protein sequence, read N- to C-terminus: Ephrin type-A receptor 10 (1007 aa).

The first 22 residues, 1-22, serve as a signal peptide directing secretion; sequence METGAGPHPLRLFVCLIPLCLA. Over 23 to 565 the chain is Extracellular; sequence LLLGPGRPGT…APGSRDQSPA (543 aa). Residues 35-216 enclose the Eph LBD domain; sequence EVILLDSKAS…YYKQCRATVR (182 aa). Residue Asn311 is glycosylated (N-linked (GlcNAc...) asparagine). Disordered regions lie at residues 323–343 and 467–486; these read ARSP…APRD and PQSV…PGTN. Fibronectin type-III domains lie at 340–452 and 456–554; these read APRD…TGPG and EEDE…TPGE. The N-linked (GlcNAc...) asparagine glycan is linked to Asn486. A helical membrane pass occupies residues 566-586; it reads VVVTVVTISALLVLGSVMSVL. Over 587 to 1007 the chain is Cytoplasmic; it reads AIWRRPCDGK…LQLQGQGVQV (421 aa). The Protein kinase domain occupies 644–899; it reads VTLEKSLGAG…PRFSQIHSIL (256 aa). An SAM domain is found at 932-996; the sequence is PSFGSVGAWL…LSGISALQTR (65 aa).

It belongs to the protein kinase superfamily. Tyr protein kinase family. Ephrin receptor subfamily. As to expression, expressed in the cochlea, in the organ of Corti, spiral ganglion, and stria vascularis.

It localises to the cell membrane. It catalyses the reaction L-tyrosyl-[protein] + ATP = O-phospho-L-tyrosyl-[protein] + ADP + H(+). Its function is as follows. Receptor for members of the ephrin-A family. Binds to EFNA3, EFNA4 and EFNA5. This chain is Ephrin type-A receptor 10 (Epha10), found in Mus musculus (Mouse).